We begin with the raw amino-acid sequence, 258 residues long: MILDKIFEKTKEDLKERKLKLPYDMLGRSLASNPFFPKDVIKALKRVEKEVKIIAEVKKASPSKGVIREDFDPLSIALNYEKNKAAAISVLTEPHFFKGSLEYLSLIRRYTQIPLLRKDFIFDEYQILEALVYGADFVLLIAKMLSMKELKKLLEFARHLGLEALVEIHDKEDLSKAIFAGADIIGINHRNLEDFTMDMSLCEKLIPKIPNSKIIIAESGLENKEFLEYLQNLGVDAFLIGEYFMREEDEGKALKALL.

The protein belongs to the TrpC family.

It catalyses the reaction 1-(2-carboxyphenylamino)-1-deoxy-D-ribulose 5-phosphate + H(+) = (1S,2R)-1-C-(indol-3-yl)glycerol 3-phosphate + CO2 + H2O. It participates in amino-acid biosynthesis; L-tryptophan biosynthesis; L-tryptophan from chorismate: step 4/5. This is Indole-3-glycerol phosphate synthase from Campylobacter jejuni subsp. doylei (strain ATCC BAA-1458 / RM4099 / 269.97).